A 375-amino-acid polypeptide reads, in one-letter code: Chaperone protein DnaJ (375 aa).

The J domain occupies 4–68 (DYYEILGVSR…ETRARYDRFG (65 aa)). Residues 135-217 (GGEKEIRISH…CDGKGANQVT (83 aa)) form a CR-type zinc finger. Residues cysteine 148, cysteine 151, cysteine 165, cysteine 168, cysteine 191, cysteine 194, cysteine 205, and cysteine 208 each coordinate Zn(2+). 4 CXXCXGXG motif repeats span residues 148 to 155 (CEVCSGSG), 165 to 172 (CSTCSGSG), 191 to 198 (CPTCNGTG), and 205 to 212 (CDACDGKG).

It belongs to the DnaJ family. As to quaternary structure, homodimer. Zn(2+) serves as cofactor.

The protein resides in the cytoplasm. In terms of biological role, participates actively in the response to hyperosmotic and heat shock by preventing the aggregation of stress-denatured proteins and by disaggregating proteins, also in an autonomous, DnaK-independent fashion. Unfolded proteins bind initially to DnaJ; upon interaction with the DnaJ-bound protein, DnaK hydrolyzes its bound ATP, resulting in the formation of a stable complex. GrpE releases ADP from DnaK; ATP binding to DnaK triggers the release of the substrate protein, thus completing the reaction cycle. Several rounds of ATP-dependent interactions between DnaJ, DnaK and GrpE are required for fully efficient folding. Also involved, together with DnaK and GrpE, in the DNA replication of plasmids through activation of initiation proteins. The protein is Chaperone protein DnaJ of Nostoc punctiforme (strain ATCC 29133 / PCC 73102).